A 75-amino-acid polypeptide reads, in one-letter code: Exodeoxyribonuclease 7 small subunit (75 aa).

It belongs to the XseB family. As to quaternary structure, heterooligomer composed of large and small subunits.

It localises to the cytoplasm. The enzyme catalyses Exonucleolytic cleavage in either 5'- to 3'- or 3'- to 5'-direction to yield nucleoside 5'-phosphates.. Functionally, bidirectionally degrades single-stranded DNA into large acid-insoluble oligonucleotides, which are then degraded further into small acid-soluble oligonucleotides. This Chlamydia caviae (strain ATCC VR-813 / DSM 19441 / 03DC25 / GPIC) (Chlamydophila caviae) protein is Exodeoxyribonuclease 7 small subunit.